The chain runs to 402 residues: Phosphoglycerate kinase (402 aa).

Substrate-binding positions include 24-26 (DFN), Arg40, 63-66 (HFGR), Arg122, and Arg155. ATP is bound by residues Lys206, Gly297, Glu328, and 358–361 (GGDS).

The protein belongs to the phosphoglycerate kinase family. Monomer.

It localises to the cytoplasm. It catalyses the reaction (2R)-3-phosphoglycerate + ATP = (2R)-3-phospho-glyceroyl phosphate + ADP. It functions in the pathway carbohydrate degradation; glycolysis; pyruvate from D-glyceraldehyde 3-phosphate: step 2/5. In Prochlorococcus marinus (strain AS9601), this protein is Phosphoglycerate kinase.